Reading from the N-terminus, the 499-residue chain is MLGYNEKLVLLKLNEVKKARIEELVKLTGLEQVAIMRALLTLEKEGLAKISERKERIIRLTDLGRKYIQMGLPEIRALNVLKSKKKVKLDELRGVLTEDELKPIVGILRKEGWVKVEKTPEGLVLEITERGENPEERPIDKALKILSEKEYATSEEISKIVPINELKRRKVAQEEEVVERIAEITEKGVELVKKGIELKREVTSLTPELIASGKWREVEFKPFNIKAPVKKIYPGKKQPYRVFLDKIRRKLIEMGFIEITVDSLIETQFWNFDALFQPQNHPAREWTDTYQLKYPEKGYLPNRELVERVKEAHERGLAGSRGWGYVWSPERAMFLMPRAHATALSARQLAKGIEIPGKYFTIQRVFRPDVLDRTHLIEFNQIDGFVAAEDLTFRHLLGILKKFAIEIAGAKKVKFFPDYYPFTEPSVQLSAYHPELGWVEFGGAGVFREEMTKALGIDVPVIAWGIGIDRLAMFRLGIDDIRYLFSYDLKWLREAKLIW.

Residues Thr-342, 381–383 (QID), and Phe-422 each bind L-phenylalanine. Mg(2+) is bound at residue Glu-424. Phe-447 serves as a coordination point for L-phenylalanine.

It belongs to the class-II aminoacyl-tRNA synthetase family. Phe-tRNA synthetase alpha subunit type 2 subfamily. As to quaternary structure, tetramer of two alpha and two beta subunits. Mg(2+) serves as cofactor.

Its subcellular location is the cytoplasm. The enzyme catalyses tRNA(Phe) + L-phenylalanine + ATP = L-phenylalanyl-tRNA(Phe) + AMP + diphosphate + H(+). This chain is Phenylalanine--tRNA ligase alpha subunit, found in Pyrococcus furiosus (strain ATCC 43587 / DSM 3638 / JCM 8422 / Vc1).